The primary structure comprises 384 residues: MDGETAGEKGSLVPQPGALGAPALGGAPAPGVRREPKKYAVTDDYQLSKQVLGLGVNGKVLECYHRRSGQKCALKLLYDSPKARQEVDHHWQASGGPHIVRILDVYENMHHGKRCLLIVMECMEGGELFSRIQERGDQAFTEREAAEIMRDIGTAIQFLHSQNIAHRDVKPENLLYTSKEKDAVLKLTDFGFAKETTQNALQTPCYTPYYVAPEVLGPEKYDKSCDMWSLGVIMYILLCGFPPFYSNTGQAISPGMKRRIRLGQYGFPKPEWADVSEDAKQLIRLLLKTDPTERLTIMQFMNHPWINQSMEVPQTPLHTARVLEEDKDHWDDVKEEMTSALATMRVDYDQVKIKDLKTSNNRLLNKRRKKQGGSSSASPGCNNQ.

Methionine 1 carries the post-translational modification N-acetylmethionine. Positions methionine 1–arginine 33 are disordered. Residues proline 14–glycine 31 show a composition bias toward low complexity. Residues glutamine 46–isoleucine 306 form the Protein kinase domain. ATP-binding positions include leucine 52–valine 60 and lysine 75. Aspartate 168 functions as the Proton acceptor in the catalytic mechanism. The residue at position 203 (threonine 203) is a Phosphothreonine; by MAPK14. Serine 253 is subject to Phosphoserine; by MAPK14. Serine 309 carries the phosphoserine; by autocatalysis modification. Positions serine 309–arginine 345 are autoinhibitory helix. Threonine 315 is modified (phosphothreonine; by MAPK14). Positions methionine 337–valine 346 match the Nuclear export signal (NES) motif. The interval aspartate 347–glutamine 371 is p38 MAPK-binding site. Short sequence motifs (bipartite nuclear localization signal) lie at residues lysine 352 to aspartate 355 and lysine 366 to lysine 370. Positions serine 359–glutamine 384 are disordered. The span at glycine 372–glutamine 384 shows a compositional bias: polar residues.

Belongs to the protein kinase superfamily. CAMK Ser/Thr protein kinase family. In terms of assembly, heterodimer with p38-alpha/MAPK14. The heterodimer with p38-alpha/MAPK14 forms a stable complex: molecules are positioned 'face to face' so that the ATP-binding sites of both kinases are at the heterodimer interface. Interacts with TCF3 and with polycomb proteins, such as PCH2 and BMI1/PCGF4. Phosphorylated and activated by MAPK1/ERK2 and MAPK3/ERK1. Phosphorylated and activated by MAP kinase p38-alpha/MAPK14 at Thr-203, Ser-253 and Thr-315.

It is found in the nucleus. Its subcellular location is the cytoplasm. The enzyme catalyses L-seryl-[protein] + ATP = O-phospho-L-seryl-[protein] + ADP + H(+). The catalysed reaction is L-threonyl-[protein] + ATP = O-phospho-L-threonyl-[protein] + ADP + H(+). With respect to regulation, activated following phosphorylation by p38-alpha/MAPK14 following various stresses. Inhibited by ligand 5B (2'-[2-(1,3-benzodioxol-5-yl)pyrimidin-4-yl]-5',6'-dihydrospiro[piperidine-4,7'-pyrrolo[3,2-c]pyridin]- 4'(1'h)-one) and ligand P4O (2-[2-(2-fluorophenyl)pyridin-4-yl]-1,5,6,7-tetrahydro- 4h-pyrrolo[3,2-c]pyridin-4-one), 2 ATP-competitive inhibitors. In terms of biological role, stress-activated serine/threonine-protein kinase involved in cytokines production, endocytosis, cell migration, chromatin remodeling and transcriptional regulation. Following stress, it is phosphorylated and activated by MAP kinase p38-alpha/MAPK14, leading to phosphorylation of substrates. Phosphorylates serine in the peptide sequence, Hyd-X-R-X(2)-S, where Hyd is a large hydrophobic residue. MAPKAPK2 and MAPKAPK3, share the same function and substrate specificity, but MAPKAPK3 kinase activity and level in protein expression are lower compared to MAPKAPK2. Phosphorylates HSP27/HSPB1, KRT18, KRT20, RCSD1, RPS6KA3, TAB3 and TTP/ZFP36. Mediates phosphorylation of HSP27/HSPB1 in response to stress, leading to dissociate HSP27/HSPB1 from large small heat-shock protein (sHsps) oligomers and impair their chaperone activities and ability to protect against oxidative stress effectively. Involved in inflammatory response by regulating tumor necrosis factor (TNF) and IL6 production post-transcriptionally: acts by phosphorylating AU-rich elements (AREs)-binding proteins, such as TTP/ZFP36, leading to regulate the stability and translation of TNF and IL6 mRNAs. Phosphorylation of TTP/ZFP36, a major post-transcriptional regulator of TNF, promotes its binding to 14-3-3 proteins and reduces its ARE mRNA affinity leading to inhibition of dependent degradation of ARE-containing transcript. Involved in toll-like receptor signaling pathway (TLR) in dendritic cells: required for acute TLR-induced macropinocytosis by phosphorylating and activating RPS6KA3. Also acts as a modulator of Polycomb-mediated repression. The protein is MAP kinase-activated protein kinase 3 (Mapkapk3) of Rattus norvegicus (Rat).